The sequence spans 397 residues: Putative F-box protein At2g04810 (397 aa).

The region spanning 20–68 (SDWSKLCPDVLRKIYETLRSPVDSHRAKIVCSNWYSVWKTCVKRPLCPL) is the F-box domain.

This Arabidopsis thaliana (Mouse-ear cress) protein is Putative F-box protein At2g04810.